Consider the following 99-residue polypeptide: DNA-binding protein Fis (99 aa).

Positions 75–94 (QTRAATMLGINRGTLRKKLK) form a DNA-binding region, H-T-H motif.

This sequence belongs to the transcriptional regulatory Fis family. Homodimer.

Functionally, activates ribosomal RNA transcription. Plays a direct role in upstream activation of rRNA promoters. The chain is DNA-binding protein Fis from Pasteurella multocida (strain Pm70).